We begin with the raw amino-acid sequence, 395 residues long: Ribosomal RNA small subunit methyltransferase H (395 aa).

S-adenosyl-L-methionine is bound by residues 101 to 103, aspartate 120, tyrosine 147, aspartate 171, and glutamine 178; that span reads GGH.

It belongs to the methyltransferase superfamily. RsmH family.

It localises to the cytoplasm. It carries out the reaction cytidine(1402) in 16S rRNA + S-adenosyl-L-methionine = N(4)-methylcytidine(1402) in 16S rRNA + S-adenosyl-L-homocysteine + H(+). In terms of biological role, specifically methylates the N4 position of cytidine in position 1402 (C1402) of 16S rRNA. The polypeptide is Ribosomal RNA small subunit methyltransferase H (Mycobacterium ulcerans (strain Agy99)).